The sequence spans 600 residues: NADH-quinone oxidoreductase subunit C/D (600 aa).

Positions 1–190 (MVNNMTDLTA…DPFELTKAKQ (190 aa)) are NADH dehydrogenase I subunit C. An NADH dehydrogenase I subunit D region spans residues 214 to 600 (DFMFLNLGPN…IDFVMSDVDR (387 aa)).

The protein in the N-terminal section; belongs to the complex I 30 kDa subunit family. This sequence in the C-terminal section; belongs to the complex I 49 kDa subunit family. NDH-1 is composed of 13 different subunits. Subunits NuoB, CD, E, F, and G constitute the peripheral sector of the complex.

It is found in the cell inner membrane. The catalysed reaction is a quinone + NADH + 5 H(+)(in) = a quinol + NAD(+) + 4 H(+)(out). Its function is as follows. NDH-1 shuttles electrons from NADH, via FMN and iron-sulfur (Fe-S) centers, to quinones in the respiratory chain. The immediate electron acceptor for the enzyme in this species is believed to be ubiquinone. Couples the redox reaction to proton translocation (for every two electrons transferred, four hydrogen ions are translocated across the cytoplasmic membrane), and thus conserves the redox energy in a proton gradient. The protein is NADH-quinone oxidoreductase subunit C/D of Salmonella arizonae (strain ATCC BAA-731 / CDC346-86 / RSK2980).